A 310-amino-acid chain; its full sequence is tRNA dimethylallyltransferase (310 aa).

Residue 10-17 (GPTAVGKS) coordinates ATP. 12-17 (TAVGKS) contacts substrate. The interval 35-38 (DSMQ) is interaction with substrate tRNA.

This sequence belongs to the IPP transferase family. As to quaternary structure, monomer. The cofactor is Mg(2+).

It catalyses the reaction adenosine(37) in tRNA + dimethylallyl diphosphate = N(6)-dimethylallyladenosine(37) in tRNA + diphosphate. Functionally, catalyzes the transfer of a dimethylallyl group onto the adenine at position 37 in tRNAs that read codons beginning with uridine, leading to the formation of N6-(dimethylallyl)adenosine (i(6)A). The polypeptide is tRNA dimethylallyltransferase (Clostridium perfringens (strain 13 / Type A)).